We begin with the raw amino-acid sequence, 110 residues long: Cuticle protein 13 (110 aa).

The sequence is that of Cuticle protein 13 from Limulus polyphemus (Atlantic horseshoe crab).